The following is a 222-amino-acid chain: Uclacyanin-3 (222 aa).

The first 21 residues, 1–21, serve as a signal peptide directing secretion; that stretch reads MGSTVAAALLLFLAAVPAVFA. Residues 22-120 form the Phytocyanin domain; the sequence is ATFKVGDISG…GMKLAVPVLA (99 aa). Cu cation-binding residues include His61, Cys102, His107, and Met112. A disulfide bridge connects residues Cys74 and Cys108. Positions 121–198 are disordered; the sequence is AAPSPSTPSS…APLPPSLSPN (78 aa). Composition is skewed to pro residues over residues 125–172 and 185–195; these read PSTP…PSAS and TPPPAPLPPSL. The GPI-anchor amidated asparagine moiety is linked to residue Asn198. A propeptide spans 199–222 (removed in mature form); sequence AASKGVMSYGIIGVTMILMYAVMT.

The protein resides in the cell membrane. In terms of biological role, probably acts as an electron carrier involved in oxygen activation and/or lignin formation. In Arabidopsis thaliana (Mouse-ear cress), this protein is Uclacyanin-3 (UCC3).